The following is a 596-amino-acid chain: Elongation factor 4 (596 aa).

Residues 2–184 form the tr-type G domain; the sequence is KHIRNFSIIA…TIVAQIPPPE (183 aa). GTP contacts are provided by residues 14–19 and 131–134; these read DHGKST and NKID.

The protein belongs to the TRAFAC class translation factor GTPase superfamily. Classic translation factor GTPase family. LepA subfamily.

The protein resides in the cell inner membrane. The enzyme catalyses GTP + H2O = GDP + phosphate + H(+). Required for accurate and efficient protein synthesis under certain stress conditions. May act as a fidelity factor of the translation reaction, by catalyzing a one-codon backward translocation of tRNAs on improperly translocated ribosomes. Back-translocation proceeds from a post-translocation (POST) complex to a pre-translocation (PRE) complex, thus giving elongation factor G a second chance to translocate the tRNAs correctly. Binds to ribosomes in a GTP-dependent manner. This chain is Elongation factor 4, found in Shewanella loihica (strain ATCC BAA-1088 / PV-4).